Consider the following 169-residue polypeptide: Probable metallophosphoesterase YsnB (169 aa).

Asp8, His10, Asp35, Asn54, His78, His107, and His109 together coordinate Mn(2+).

It belongs to the metallophosphoesterase superfamily. YfcE family. Requires Mn(2+) as cofactor.

This chain is Probable metallophosphoesterase YsnB (ysnB), found in Bacillus subtilis (strain 168).